The sequence spans 164 residues: Bacterial ferritin (164 aa).

Residues 1 to 147 (MKGKKSVISR…QQLGLIARMG (147 aa)) enclose the Ferritin-like diiron domain. Residues Glu18, Glu51, His54, Glu94, Glu129, and His132 each contribute to the Fe cation site.

Belongs to the bacterioferritin family. In terms of assembly, heterooligomer of 24 subunits, arranged as 12 dimers, that are packed together to form an approximately spherical molecule with a central cavity, in which large amounts of iron can be deposited.

The catalysed reaction is 4 Fe(2+) + O2 + 4 H(+) = 4 Fe(3+) + 2 H2O. It carries out the reaction Fe(2+)(in) = Fe(2+)(out). Functionally, iron-storage protein, whose ferroxidase center binds Fe(2+), oxidizes it using dioxygen to Fe(3+), and participates in the subsequent Fe(3+) oxide mineral core formation within the central cavity of the BFR protein shell. This chain is Bacterial ferritin, found in Paramagnetospirillum magnetotacticum (Aquaspirillum magnetotacticum).